Here is a 180-residue protein sequence, read N- to C-terminus: NADH-quinone oxidoreductase subunit I (180 aa).

2 consecutive 4Fe-4S ferredoxin-type domains span residues 46–80 (GRIVLTCDPDGYERCVACNLCAVACPVDCISLQKT) and 90–119 (EFFRINFSRCIFCGLCEEACPTTAIQLTPD). The [4Fe-4S] cluster site is built by C60, C63, C66, C70, C99, C102, C105, and C109.

It belongs to the complex I 23 kDa subunit family. In terms of assembly, NDH-1 is composed of 14 different subunits. Subunits NuoA, H, J, K, L, M, N constitute the membrane sector of the complex. It depends on [4Fe-4S] cluster as a cofactor.

The protein localises to the cell membrane. It catalyses the reaction a quinone + NADH + 5 H(+)(in) = a quinol + NAD(+) + 4 H(+)(out). Functionally, NDH-1 shuttles electrons from NADH, via FMN and iron-sulfur (Fe-S) centers, to quinones in the respiratory chain. The immediate electron acceptor for the enzyme in this species is believed to be ubiquinone. Couples the redox reaction to proton translocation (for every two electrons transferred, four hydrogen ions are translocated across the cytoplasmic membrane), and thus conserves the redox energy in a proton gradient. The protein is NADH-quinone oxidoreductase subunit I of Baumannia cicadellinicola subsp. Homalodisca coagulata.